The primary structure comprises 498 residues: Actin-binding protein WASF2 (498 aa).

Disordered regions lie at residues 173-203 and 240-435; these read KEKR…KEEW and NVDA…AVSD. A compositionally biased stretch (low complexity) spans 252 to 263; that stretch reads SDSASSPSPSFS. Residues 298 to 407 show a composition bias toward pro residues; that stretch reads SHPPPAPPLG…PPPGPPPPPF (110 aa). Positions 436-453 constitute a WH2 domain; that stretch reads ARSDLLSAIRQGFQLRRV. Position 474 is a phosphoserine (S474).

This sequence belongs to the SCAR/WAVE family. Binds actin and the Arp2/3 complex. Interacts with BAIAP2. Component of the WAVE2 complex composed of ABI1, CYFIP1/SRA1, NCKAP1/NAP1 (NCKAP1l/HEM1 in hematopoietic cells) and WASF2/WAVE2. Directly interacts with BRK1. Interacts with FNBP1L (via the SH3 domain). In terms of assembly, (Microbial infection) Interacts with human cytomegalovirus protein UL135. In terms of tissue distribution, expressed in all tissues with strongest expression in placenta, lung, and peripheral blood leukocytes, but not in skeletal muscle.

Its subcellular location is the cytoplasm. The protein resides in the cytoskeleton. It localises to the cell projection. It is found in the lamellipodium. The protein localises to the basolateral cell membrane. Its function is as follows. Downstream effector molecule involved in the transmission of signals from tyrosine kinase receptors and small GTPases to the actin cytoskeleton. Promotes formation of actin filaments. Part of the WAVE complex that regulates lamellipodia formation. The WAVE complex regulates actin filament reorganization via its interaction with the Arp2/3 complex. In Homo sapiens (Human), this protein is Actin-binding protein WASF2.